We begin with the raw amino-acid sequence, 121 residues long: Large ribosomal subunit protein mL52 (121 aa).

Residues 1-22 constitute a mitochondrion transit peptide; it reads MAALGTWLSSVRRLHCSVVARA. The span at 98–109 shows a compositional bias: basic and acidic residues; that stretch reads QEERKKEHDLKP. The tract at residues 98 to 121 is disordered; sequence QEERKKEHDLKPKGTLLRSPLPNQ.

Belongs to the mitochondrion-specific ribosomal protein mL52 family. In terms of assembly, component of the mitochondrial ribosome large subunit (39S) which comprises a 16S rRNA and about 50 distinct proteins.

It localises to the mitochondrion. The chain is Large ribosomal subunit protein mL52 (Mrpl52) from Mus musculus (Mouse).